A 37-amino-acid chain; its full sequence is MKVRASVKPICEKCKVIKRKGKVMVICENPKHKQKQG.

The protein belongs to the bacterial ribosomal protein bL36 family.

This is Large ribosomal subunit protein bL36 from Alkaliphilus metalliredigens (strain QYMF).